The following is a 296-amino-acid chain: tRNA pseudouridine synthase B (296 aa).

The active-site Nucleophile is D38.

It belongs to the pseudouridine synthase TruB family. Type 1 subfamily.

It catalyses the reaction uridine(55) in tRNA = pseudouridine(55) in tRNA. Functionally, responsible for synthesis of pseudouridine from uracil-55 in the psi GC loop of transfer RNAs. The chain is tRNA pseudouridine synthase B from Synechocystis sp. (strain ATCC 27184 / PCC 6803 / Kazusa).